Reading from the N-terminus, the 466-residue chain is Collagenase 3 (466 aa).

The N-terminal stretch at 1-13 (ATFFLLSWTHCWS) is a signal peptide. Positions 14-98 (LPLPYGDDDD…PRCGVPDVGV (85 aa)) are cleaved as a propeptide — activation peptide. Residues 89–96 (PRCGVPDV) carry the Cysteine switch motif. C91 provides a ligand contact to Zn(2+). N-linked (GlcNAc...) asparagine glycosylation is present at N112. Position 123 (D123) interacts with Ca(2+). An N-linked (GlcNAc...) asparagine glycan is attached at N147. D157 serves as a coordination point for Ca(2+). Residues H167 and D169 each contribute to the Zn(2+) site. Residues 171 to 241 (YPFDGPSGLL…GALMFPIYTY (71 aa)) form an interaction with TIMP2 region. The Ca(2+) site is built by D174, G175, S177, and L179. H182 contributes to the Zn(2+) binding site. Residues N189, G191, and D193 each coordinate Ca(2+). H195 contributes to the Zn(2+) binding site. Residues D197, D198, and E200 each coordinate Ca(2+). H217 provides a ligand contact to Zn(2+). E218 is an active-site residue. Residues H221, H227, and M235 each coordinate Zn(2+). The interval 258-279 (QSLYGPGDEDPNPKHPKTPEKC) is disordered. The segment at 263 to 466 (PGDEDPNPKH…VMPTNSLLWC (204 aa)) is interaction with collagen. A compositionally biased stretch (basic and acidic residues) spans 268–279 (PNPKHPKTPEKC). Hemopexin repeat units lie at residues 276–325 (PEKC…WPEL), 326–372 (PNHV…GFPK), 374–422 (VKRL…FPGI), and 423–466 (GDKV…LLWC). A disulfide bridge links C279 with C466. Positions 286, 288, 330, and 332 each coordinate Ca(2+). Phosphotyrosine; by PKDCC is present on Y361. Ca(2+) is bound by residues S378 and A380. Residue N404 is glycosylated (N-linked (GlcNAc...) asparagine). Residues D427 and V429 each coordinate Ca(2+).

Belongs to the peptidase M10A family. The cofactor is Ca(2+). Requires Zn(2+) as cofactor. In terms of processing, the proenzyme is activated by removal of the propeptide; this cleavage can be effected by other matrix metalloproteinases, such as MMP2, MMP3 and MMP14 and may involve several cleavage steps. Cleavage can also be autocatalytic, after partial maturation by another protease or after treatment with 4-aminophenylmercuric acetate (APMA) (in vitro). Post-translationally, N-glycosylated. Tyrosine phosphorylated by PKDCC/VLK.

The protein resides in the secreted. Its subcellular location is the extracellular space. It localises to the extracellular matrix. Plays a role in the degradation of extracellular matrix proteins including fibrillar collagen, fibronectin, TNC and ACAN. Cleaves triple helical collagens, including type I, type II and type III collagen, but has the highest activity with soluble type II collagen. Can also degrade collagen type IV, type XIV and type X. May also function by activating or degrading key regulatory proteins, such as TGFB1 and CCN2. Plays a role in wound healing, tissue remodeling, cartilage degradation, bone development, bone mineralization and ossification. Required for normal embryonic bone development and ossification. Plays a role in the healing of bone fractures via endochondral ossification. Plays a role in wound healing, probably by a mechanism that involves proteolytic activation of TGFB1 and degradation of CCN2. Plays a role in keratinocyte migration during wound healing. May play a role in cell migration and in tumor cell invasion. This chain is Collagenase 3 (Mmp13), found in Rattus norvegicus (Rat).